Here is a 594-residue protein sequence, read N- to C-terminus: Beta-mannosyltransferase 3 (594 aa).

At 1-6 the chain is on the cytoplasmic side; sequence MRIRSN. The helical transmembrane segment at 7-27 threads the bilayer; it reads VLLLSTAGALALVWFAVVFSW. Residues 28–594 lie on the Extracellular side of the membrane; sequence DDKSIFGIPT…KDEVKDTKAK (567 aa). N-linked (GlcNAc...) asparagine glycosylation is present at asparagine 305. Residues 512–594 adopt a coiled-coil conformation; it reads VTRGEEDRLK…KDEVKDTKAK (83 aa). The segment covering 517 to 558 has biased composition (basic and acidic residues); it reads EDRLKNKEKERKIEEKRKKEEERKKKEEEKKKKEEEEKKKKE. The tract at residues 517–564 is disordered; it reads EDRLKNKEKERKIEEKRKKEEERKKKEEEKKKKEEEEKKKKEEEEEEE.

It belongs to the BMT family.

It is found in the membrane. Functionally, beta-mannosyltransferase involved in cell wall biosynthesis. The protein is Beta-mannosyltransferase 3 (BMT3) of Komagataella phaffii (strain ATCC 76273 / CBS 7435 / CECT 11047 / NRRL Y-11430 / Wegner 21-1) (Yeast).